A 290-amino-acid chain; its full sequence is MQQQIGIFEAIVLGFVQGITEYFPISSTAHLRVVPALLGWADPGTAYSAVIQLGSLLAVLTYFYKDLVEILSGTVRALRTGDTQSREVRLFWGIILGTIPIVIAGLALKSTLEAPGSPLRALSVIAVASIVMAALLWLSESLGKRTRTMKGIRVIDGILIGCAQALALVPGVSRSGSTLTAALFLGFQRADGARFSFLLAIPAIFLSGLLELKVLVDEGFSGGIGPIVAGFVSSTVFSYLAIAWLLKFLQTRSTLVFVIYRFFFGALLLGLLAAGLLPDIEPVRQALNLP.

Transmembrane regions (helical) follow at residues 5–25 (IGIF…YFPI), 44–64 (GTAY…TYFY), 88–108 (VRLF…GLAL), 122–142 (LSVI…SESL), 152–172 (IRVI…VPGV), 195–215 (FSFL…LKVL), 226–246 (PIVA…AWLL), and 255–275 (LVFV…LAAG).

The protein belongs to the UppP family.

The protein localises to the cell inner membrane. It catalyses the reaction di-trans,octa-cis-undecaprenyl diphosphate + H2O = di-trans,octa-cis-undecaprenyl phosphate + phosphate + H(+). Functionally, catalyzes the dephosphorylation of undecaprenyl diphosphate (UPP). Confers resistance to bacitracin. The protein is Undecaprenyl-diphosphatase of Gloeobacter violaceus (strain ATCC 29082 / PCC 7421).